A 337-amino-acid chain; its full sequence is uncharacterized protein (337 aa).

A disordered region spans residues 291–314 (NKTRQCSNTKTTTKSTMTPINNGF). Over residues 299 to 308 (TKTTTKSTMT) the composition is skewed to low complexity.

This is an uncharacterized protein from Acanthamoeba polyphaga mimivirus (APMV).